The chain runs to 55 residues: Metallothionein-3 (55 aa).

It belongs to the metallothionein superfamily. Type 11 family.

This chain is Metallothionein-3 (MTP3), found in Yarrowia lipolytica (strain CLIB 122 / E 150) (Yeast).